A 205-amino-acid polypeptide reads, in one-letter code: Outer-membrane lipoprotein LolB (205 aa).

The first 17 residues, 1–17, serve as a signal peptide directing secretion; it reads MFLRHVIVFSFIALLAG. Cys-18 carries the N-palmitoyl cysteine lipid modification. A lipid anchor (S-diacylglycerol cysteine) is attached at Cys-18.

This sequence belongs to the LolB family. In terms of assembly, monomer.

It localises to the cell outer membrane. Plays a critical role in the incorporation of lipoproteins in the outer membrane after they are released by the LolA protein. This chain is Outer-membrane lipoprotein LolB, found in Pseudomonas fluorescens (strain Pf0-1).